The following is a 289-amino-acid chain: Glucosamine-6-phosphate deaminase 1 (289 aa).

Catalysis depends on aspartate 72, which acts as the Proton acceptor; for enolization step. The active-site For ring-opening step is aspartate 141. Histidine 143 (proton acceptor; for ring-opening step) is an active-site residue. Glutamate 148 (for ring-opening step) is an active-site residue. Threonine 161 carries the phosphothreonine modification.

It belongs to the glucosamine/galactosamine-6-phosphate isomerase family. Homohexamer. As to expression, widely expressed. Detected in brain, liver, kidney, muscle, ovary, testis, spermatids and spermatozoa. In spermatids, located close to the developing acrosome vesicle. In spermatozoa, found close to the acrosomal region.

The protein resides in the cytoplasm. It carries out the reaction alpha-D-glucosamine 6-phosphate + H2O = beta-D-fructose 6-phosphate + NH4(+). The protein operates within nucleotide-sugar biosynthesis; UDP-N-acetyl-alpha-D-glucosamine biosynthesis; alpha-D-glucosamine 6-phosphate from D-fructose 6-phosphate: step 1/1. Its activity is regulated as follows. Allosterically activated by N-acetylglucosamine-6-phosphate (GlcNAc6P). Functionally, catalyzes the reversible conversion of alpha-D-glucosamine 6-phosphate (GlcN-6P) into beta-D-fructose 6-phosphate (Fru-6P) and ammonium ion, a regulatory reaction step in de novo uridine diphosphate-N-acetyl-alpha-D-glucosamine (UDP-GlcNAc) biosynthesis via hexosamine pathway. Deamination is coupled to aldo-keto isomerization mediating the metabolic flux from UDP-GlcNAc toward Fru-6P. At high ammonium level can drive amination and isomerization of Fru-6P toward hexosamines and UDP-GlcNAc synthesis. Has a role in fine tuning the metabolic fluctuations of cytosolic UDP-GlcNAc and their effects on hyaluronan synthesis that occur during tissue remodeling. Seems to trigger calcium oscillations in mammalian eggs. These oscillations serve as the essential trigger for egg activation and early development of the embryo. The polypeptide is Glucosamine-6-phosphate deaminase 1 (Mus musculus (Mouse)).